The sequence spans 467 residues: tRNA-splicing endonuclease subunit SEN54 (467 aa).

Disordered stretches follow at residues 1–32 (MQFAGKKTDQVTTSNPGFEEEEEEEEELQQDW) and 374–413 (KRSAKSQTEKSESSMKASFQKKTAQSSTKKKRKAYPPHIQ). Residues 18 to 29 (FEEEEEEEEELQ) show a composition bias toward acidic residues. Positions 401 to 413 (TKKKRKAYPPHIQ) are enriched in basic residues.

It belongs to the SEN54 family. TRNA splicing endonuclease is a heterotetramer composed of SEN2, SEN15, SEN34 and SEN54. Interacts directly with SEN2.

Its subcellular location is the nucleus. It localises to the endomembrane system. The protein resides in the mitochondrion outer membrane. Non-catalytic subunit of the tRNA-splicing endonuclease complex, a complex responsible for identification and cleavage of the splice sites in pre-tRNA. It cleaves pre-tRNA at the 5' and 3' splice sites to release the intron. The products are an intron and two tRNA half-molecules bearing 2',3' cyclic phosphate and 5'-OH termini. There are no conserved sequences at the splice sites, but the intron is invariably located at the same site in the gene, placing the splice sites an invariant distance from the constant structural features of the tRNA body. May be required to embody the molecular ruler of the complex. The sequence is that of tRNA-splicing endonuclease subunit SEN54 (SEN54) from Saccharomyces cerevisiae (strain ATCC 204508 / S288c) (Baker's yeast).